The following is a 1011-amino-acid chain: MKTFFCNRTVDKGEMKRLIKWVLLNYGTEKTTRLIDKLKTMGFHYATHAGISLGIDDLSIPPIKSAFLLNAENDIYENDLRLKRGQITSVQRLEKALDIWNTTNDTLKTEVVKYFRSTDIFNPVYMMAFSGARGNISQVRQLVGMRGLMADPQGQILDFPIRRNFREGLTVTEYMISCYGARKGLVDTALRTASSGYLTRRLVDVAQSVIIQQVDCQTTQGLRIVPELEKIESQLIGRVLFEDVVDLETGRMVGYKNQDISPALALKLIKQPALTIRSPLTCRFHAVCQLCYGWNLAQQKLVQLGEAVGVLAAQSIGEPGTQLTMRTFHTGGVFAGEATEKVYSPHNGIVFYSKQARGRKIVSKYGEVAFLTFEPLKVKIKNDNTTSVLEFPSFTLLYIPPGQTVGEHQSLAELSRIENKQNFQQFEVGTENVQKEFMSNCSGQIFLPQRQNALINEDNAGTTTFNYSEMWLLAGKILDSKTLVPGDQIKNALYPIRSKINCEPSRLTTTLPLGYVFPIDSNQTSLSKLQSTDAETLKQLPLLQFSKLSADNLKFARSYALELNKTLFHCDSLSKYRFITSDLEHLPFKSKNLFFNQDTPTKKVPTFKIKFSRFGKADKFNAKEKFLLLRSVTKLVSTQTNPLKTQFANNLFVQNSINKNKKTFLEVVKPLKTFQKKTNFFPSPTHENIKSFNPSLQNGNLMSVDADYVRLNVQYGKGFSSLLNCGEVRATNCMMTEKDQIAFKSPVCDLKMKVGDYARVEDQLTTSTRIPLSGQINFITAENVLFRSVQPYLLVPGSNVVVKHGSLVQENSVLGTLMTSQSTAGDIVQGLPKVDELLEAREPQHKVLTSMHAKLSTLFSQYGKIYGLREGCELSFQKIRQFLVQEVQDVYQSQGVYIGDKHVEIIVRQMTTHVVVVDAGKTGLLPGDIVDIRRIEQLEHTGFFAGVKYRPMLLGITRAALMAESFISAASFQETKRVLSKAALEGQIDWLTGLKENVILGRLIPAGTGLY.

Zn(2+) contacts are provided by cysteine 216, cysteine 282, cysteine 288, and cysteine 291.

Belongs to the RNA polymerase beta' chain family. RpoC2 subfamily. In plastids the minimal PEP RNA polymerase catalytic core is composed of four subunits: alpha, beta, beta', and beta''. When a (nuclear-encoded) sigma factor is associated with the core the holoenzyme is formed, which can initiate transcription. Zn(2+) is required as a cofactor.

It is found in the plastid. Its subcellular location is the chloroplast. It carries out the reaction RNA(n) + a ribonucleoside 5'-triphosphate = RNA(n+1) + diphosphate. DNA-dependent RNA polymerase catalyzes the transcription of DNA into RNA using the four ribonucleoside triphosphates as substrates. This chain is DNA-directed RNA polymerase subunit beta'', found in Ostreococcus tauri.